A 1337-amino-acid chain; its full sequence is ABC transporter D family member 1 (1337 aa).

The next 4 helical transmembrane spans lie at 24 to 44 (ILLA…KSRV), 142 to 162 (APLF…LSTL), 247 to 267 (YASP…GTAI), and 342 to 362 (FLLK…PFFS). The ABC transmembrane type-1 1 domain maps to 117 to 395 (VFRTALSNRL…SVIISLFQAL (279 aa)). In terms of domain architecture, ABC transporter 1 spans 448–695 (VEFSDVKVVT…DAMVVQRAFA (248 aa)). 481-488 (GPNGSGKS) contacts ATP. Residues 751–1049 (LIPTIFDKQG…VVSQSFMAFG (299 aa)) enclose the ABC transmembrane type-1 2 domain. A helical membrane pass occupies residues 900–920 (LLTGQRGVAILYTYMLLGLGF). The ABC transporter 2 domain occupies 1091–1337 (LDSQDLLSFS…ELRSIEQTTE (247 aa)). An ATP-binding site is contributed by 1130-1137 (GPNGSGKT).

This sequence belongs to the ABC transporter superfamily. ABCD family. Peroxisomal fatty acyl CoA transporter (TC 3.A.1.203) subfamily.

Its subcellular location is the peroxisome membrane. It localises to the glyoxysome membrane. The enzyme catalyses an acyl-CoA(out) + ATP + H2O = an acyl-CoA(in) + ADP + phosphate + H(+). Functionally, contributes to the transport of fatty acids and their derivatives (acyl CoAs) across the peroxisomal membrane. Provides acetate to the glyoxylate cycle in developing seedlings. Involved in pollen tube elongation, ovule fertilization, and seeds germination after imbibition (controls the switch between the opposing developmental programs of dormancy and germination), probably by promoting beta-oxidation of storage lipids during gluconeogenesis. Required for biosynthesis of jasmonic acid and conversion of indole butyric acid to indole acetic acid. Confers sensitivity to monofluoroacetic acid (FAc), a toxic acetate analog, and to 2,4-dichlorophenoxybutyric acid (2,4-DB) and indole-3-butyric acid (IBA), two precursors of auxin after beta-oxidation. In Arabidopsis thaliana (Mouse-ear cress), this protein is ABC transporter D family member 1.